A 462-amino-acid chain; its full sequence is Cysteine--tRNA ligase (462 aa).

C24 contacts Zn(2+). Positions 26–36 match the 'HIGH' region motif; the sequence is PTVYDDAHLGH. Zn(2+)-binding residues include C199, H224, and E228. The short motif at 256–260 is the 'KMSKS' region element; that stretch reads KMSKS. K259 lines the ATP pocket.

This sequence belongs to the class-I aminoacyl-tRNA synthetase family. In terms of assembly, monomer. Zn(2+) is required as a cofactor.

The protein localises to the cytoplasm. The catalysed reaction is tRNA(Cys) + L-cysteine + ATP = L-cysteinyl-tRNA(Cys) + AMP + diphosphate. This is Cysteine--tRNA ligase (cysS) from Campylobacter jejuni subsp. jejuni serotype O:2 (strain ATCC 700819 / NCTC 11168).